A 159-amino-acid polypeptide reads, in one-letter code: Keratin-associated protein 9-3 (159 aa).

16 consecutive repeat copies span residues 8-12 (CCQPT), 13-17 (CCRTT), 32-36 (CCQPS), 37-41 (CCVSS), 46-50 (CCHPT), 51-55 (CCQNT), 56-60 (CCRTT), 61-65 (CCQPI), 70-74 (CCQPS), 75-79 (CCSTP), 80-84 (CCQPT), 85-89 (CCGSS), 129-133 (CCRPA), 134-138 (CCETT), 139-143 (CCRTT), and 153-157 (CCQPS). A 16 X 5 AA repeats of C-C-[RQVSHE]-[SPTN]-[TASPI] region spans residues 8-157 (CCQPTCCRTT…TCVYSCCQPS (150 aa)).

Belongs to the KRTAP type 9 family. Interacts with hair keratins.

Functionally, in the hair cortex, hair keratin intermediate filaments are embedded in an interfilamentous matrix, consisting of hair keratin-associated proteins (KRTAP), which are essential for the formation of a rigid and resistant hair shaft through their extensive disulfide bond cross-linking with abundant cysteine residues of hair keratins. The matrix proteins include the high-sulfur and high-glycine-tyrosine keratins. This is Keratin-associated protein 9-3 (KRTAP9-3) from Homo sapiens (Human).